A 350-amino-acid chain; its full sequence is MIKKAIARIVEQKDLTEGEMIEVMGQIMTGEATPAQIGAFITALRMKGETIDEITGAARVMREHATRIRAGKDLLDIDRDDINIDRETILDVVGTGGDGTNTFNVSTTVAFVVSACGVKVAKHGNRSVSSLCGSADVLEKLGVNLDITPETVEQCITKIGIGFLFAPALHGAMRYAIGPRREIGIRTIFNILGPLTNPAGADCQVMGVYRPGLVEKLAGVLHRLGCRHGFVVHGMDGMDEITTTTETLIAEVTTSGVSICTIHPEELGFSRCSMDELRGGDATANADIVRSVLQGVAGPRRDIVLINAAYALVAADRAATPEQAIALAAEAIDSGRAMEQLRKLIQITKD.

Residues Gly94, 97 to 98 (GD), Thr102, 104 to 107 (NVST), 122 to 130 (KHGNRSVSS), and Ser134 contribute to the 5-phospho-alpha-D-ribose 1-diphosphate site. Gly94 lines the anthranilate pocket. A Mg(2+)-binding site is contributed by Ser106. Asn125 provides a ligand contact to anthranilate. Arg180 serves as a coordination point for anthranilate. Residues Asp239 and Glu240 each coordinate Mg(2+).

The protein belongs to the anthranilate phosphoribosyltransferase family. Homodimer. Requires Mg(2+) as cofactor.

The catalysed reaction is N-(5-phospho-beta-D-ribosyl)anthranilate + diphosphate = 5-phospho-alpha-D-ribose 1-diphosphate + anthranilate. Its pathway is amino-acid biosynthesis; L-tryptophan biosynthesis; L-tryptophan from chorismate: step 2/5. Its function is as follows. Catalyzes the transfer of the phosphoribosyl group of 5-phosphorylribose-1-pyrophosphate (PRPP) to anthranilate to yield N-(5'-phosphoribosyl)-anthranilate (PRA). This chain is Anthranilate phosphoribosyltransferase, found in Pelobacter propionicus (strain DSM 2379 / NBRC 103807 / OttBd1).